The chain runs to 404 residues: Cysteine desulfurase IscS (404 aa).

Pyridoxal 5'-phosphate contacts are provided by residues 75–76, Asn-155, Gln-183, and 203–205; these read AT and SGH. Position 206 is an N6-(pyridoxal phosphate)lysine (Lys-206). Thr-243 contacts pyridoxal 5'-phosphate. Cys-328 functions as the Cysteine persulfide intermediate in the catalytic mechanism. Cys-328 provides a ligand contact to [2Fe-2S] cluster.

This sequence belongs to the class-V pyridoxal-phosphate-dependent aminotransferase family. NifS/IscS subfamily. As to quaternary structure, homodimer. Forms a heterotetramer with IscU, interacts with other sulfur acceptors. It depends on pyridoxal 5'-phosphate as a cofactor.

It localises to the cytoplasm. It carries out the reaction (sulfur carrier)-H + L-cysteine = (sulfur carrier)-SH + L-alanine. The protein operates within cofactor biosynthesis; iron-sulfur cluster biosynthesis. Functionally, master enzyme that delivers sulfur to a number of partners involved in Fe-S cluster assembly, tRNA modification or cofactor biosynthesis. Catalyzes the removal of elemental sulfur and selenium atoms from cysteine and selenocysteine to produce alanine. Functions as a sulfur delivery protein for Fe-S cluster synthesis onto IscU, an Fe-S scaffold assembly protein, as well as other S acceptor proteins. Also functions as a selenium delivery protein in the pathway for the biosynthesis of selenophosphate. In Salmonella schwarzengrund (strain CVM19633), this protein is Cysteine desulfurase IscS.